A 175-amino-acid polypeptide reads, in one-letter code: Ribosome maturation factor RimM (175 aa).

In terms of domain architecture, PRC barrel spans 98 to 172 (DGEFHVRDLQ…WLLITPPKGL (75 aa)).

This sequence belongs to the RimM family. In terms of assembly, binds ribosomal protein uS19.

The protein localises to the cytoplasm. Functionally, an accessory protein needed during the final step in the assembly of 30S ribosomal subunit, possibly for assembly of the head region. Essential for efficient processing of 16S rRNA. May be needed both before and after RbfA during the maturation of 16S rRNA. It has affinity for free ribosomal 30S subunits but not for 70S ribosomes. In Synechococcus sp. (strain RCC307), this protein is Ribosome maturation factor RimM.